Consider the following 1002-residue polypeptide: Probable transport protein MmpL10 (1002 aa).

12 helical membrane-spanning segments follow: residues Met1–Glu21, Ile177–Leu197, Leu199–Val219, Ala228–Ile248, Ala268–Leu288, Ala306–Leu326, Tyr358–Phe378, Ile806–Val826, Val835–Gly855, Val862–Ala882, Val901–Gly921, and Leu923–Ile943.

It belongs to the resistance-nodulation-cell division (RND) (TC 2.A.6) family. MmpL subfamily.

It localises to the cell membrane. The chain is Probable transport protein MmpL10 (mmpL10) from Mycobacterium bovis (strain ATCC BAA-935 / AF2122/97).